A 354-amino-acid polypeptide reads, in one-letter code: Arginase-2, mitochondrial (354 aa).

A mitochondrion-targeting transit peptide spans 1 to 22 (MSYGSCVSRLLRTRVQSVLKKS). Mn(2+) is bound by residues histidine 120, aspartate 143, histidine 145, and aspartate 147. Residues 145–149 (HADIN), 156–158 (SGN), and aspartate 202 each bind substrate. 2 residues coordinate Mn(2+): aspartate 251 and aspartate 253. Threonine 265 and glutamate 296 together coordinate substrate. The segment at 330 to 354 (GHTVYEQLPPPSSPHESENAERVRI) is disordered. Over residues 344 to 354 (HESENAERVRI) the composition is skewed to basic and acidic residues.

It belongs to the arginase family. Homotrimer. The cofactor is Mn(2+).

It localises to the mitochondrion. It carries out the reaction L-arginine + H2O = urea + L-ornithine. Its pathway is nitrogen metabolism; urea cycle; L-ornithine and urea from L-arginine: step 1/1. Its function is as follows. May play a role in the regulation of extra-urea cycle arginine metabolism and also in down-regulation of nitric oxide synthesis. Extrahepatic arginase functions to regulate L-arginine bioavailability to nitric oxid synthase (NOS). Arginine metabolism is a critical regulator of innate and adaptive immune responses. Seems to be involved in negative regulation of the survival capacity of activated T cells. May suppress inflammation-related signaling in asthmatic airway epithelium. May play a role in promoting prenatal immune suppression. Regulates RPS6KB1 signaling, which promotes endothelial cell senescence and inflammation and implicates NOS3/eNOS dysfunction. Can inhibit endothelial autophagy independently of its enzymatic activity implicating mTORC2 signaling. Involved in vascular smooth muscle cell senescence and apoptosis independently of its enzymatic activity. This chain is Arginase-2, mitochondrial (ARG2), found in Oryctolagus cuniculus (Rabbit).